The primary structure comprises 20 residues: Putative serine protease (20 aa).

It belongs to the peptidase S1 family.

The protein resides in the secreted. Its function is as follows. Binds the A.niger cell wall component alpha-1,3-glucan, a fungal pathogen-associated molecular pattern (PAMP) that activates the host immune response. The sequence is that of Putative serine protease from Galleria mellonella (Greater wax moth).